We begin with the raw amino-acid sequence, 383 residues long: Aurachin C monooxygenase/isomerase (383 aa).

FAD is bound by residues Gly-15, Ser-47, Val-128, Asp-285, and 295-299 (GQGGC).

FAD serves as cofactor.

The enzyme catalyses aurachin C + NADH + O2 + H(+) = 4-hydroxy-2-methyl-3-oxo-4-[(2E,6E)-farnesyl]-3,4-dihydroquinoline 1-oxide + NAD(+) + H2O. It carries out the reaction aurachin C + NADPH + O2 + H(+) = 4-hydroxy-2-methyl-3-oxo-4-[(2E,6E)-farnesyl]-3,4-dihydroquinoline 1-oxide + NADP(+) + H2O. It catalyses the reaction aurachin C + NADH + O2 + H(+) = aurachin C epoxide + NAD(+) + H2O. The catalysed reaction is aurachin C + NADPH + O2 + H(+) = aurachin C epoxide + NADP(+) + H2O. The enzyme catalyses aurachin C epoxide = 2-hydroxy-1a-methyl-7a-[(2E,6E)-farnesyl]-1a,2-dihydrooxireno[2,3-b]quinolin-7(7aH)-one. It carries out the reaction 2-hydroxy-1a-methyl-7a-[(2E,6E)-farnesyl]-1a,2-dihydrooxireno[2,3-b]quinolin-7(7aH)-one = 4-hydroxy-2-methyl-3-oxo-4-[(2E,6E)-farnesyl]-3,4-dihydroquinoline 1-oxide. Functionally, catalyzes the initial step in the conversion of aurachin C to aurachin B. Catalyzes the epoxidation of the C(2)-C(3) double bond of aurachin C, which is followed by a semipinacol rearrangement, causing migration of the farnesyl group from C(3) to C(4). Accepts both NADH and NADPH, but has a preference for NADH. The protein is Aurachin C monooxygenase/isomerase of Stigmatella aurantiaca.